The sequence spans 415 residues: WD repeat-containing protein JIP5 (415 aa).

WD repeat units follow at residues Asp-5–Ala-44, Ala-104–Glu-142, Gln-145–Phe-184, Asp-189–Val-228, and Gly-233–Asp-282. The tract at residues Gly-328–Leu-415 is disordered. Over residues Glu-337–Asp-346 the composition is skewed to acidic residues. A compositionally biased stretch (low complexity) spans Asp-358 to Glu-367. Positions Glu-390–Ile-405 are enriched in basic and acidic residues.

It belongs to the WD repeat WDR55 family.

Its subcellular location is the nucleus. The protein localises to the nucleolus. This is WD repeat-containing protein JIP5 (JIP5) from Laccaria bicolor (strain S238N-H82 / ATCC MYA-4686) (Bicoloured deceiver).